The chain runs to 79 residues: MSAKKSPEELKGIFEKYAAKEGDPNQLSKEELKLLLQTEFPSLLKGPSTLDELFEELDKNGDGEVSFEEFQVLVKKISQ.

S2 is modified (N-acetylserine). EF-hand domains lie at 13 to 48 (IFEKYAAKEGDPNQLSKEELKLLLQTEFPSLLKGPS) and 45 to 79 (KGPSTLDELFEELDKNGDGEVSFEEFQVLVKKISQ). 2 residues coordinate Ca(2+): Q26 and E31. S42 is modified (phosphoserine). Residues D58, N60, D62, E64, and E69 each contribute to the Ca(2+) site.

This sequence belongs to the S-100 family.

The chain is Protein S100-G (S100G) from Bos taurus (Bovine).